Here is a 33-residue protein sequence, read N- to C-terminus: Potassium channel toxin alpha-KTx 10.5 (33 aa).

3 disulfides stabilise this stretch: Cys4/Cys23, Cys9/Cys28, and Cys13/Cys30.

As to expression, expressed by the venom gland.

Its subcellular location is the secreted. Its function is as follows. Inhibits less than 5% of human voltage-gated potassium (Kv) channel Kv1.3/KCNA3 currents at 100nM concentration and does not block human Kv1.1/KCNA1 and Kv1.2/KCNA2 currents. The sequence is that of Potassium channel toxin alpha-KTx 10.5 from Centruroides bonito (Scorpion).